Here is a 429-residue protein sequence, read N- to C-terminus: Adenylosuccinate synthetase (429 aa).

GTP contacts are provided by residues 12–18 and 40–42; these read GDEGKGK and GHT. Asp-13 functions as the Proton acceptor in the catalytic mechanism. Asp-13 and Gly-40 together coordinate Mg(2+). IMP contacts are provided by residues 13 to 16, 38 to 41, Thr-128, Arg-142, Gln-223, Thr-238, and Arg-302; these read DEGK and NAGH. His-41 acts as the Proton donor in catalysis. 298–304 is a binding site for substrate; that stretch reads TTTGRPR. GTP contacts are provided by residues Arg-304, 330-332, and 412-414; these read SID and SVG.

It belongs to the adenylosuccinate synthetase family. In terms of assembly, homodimer. It depends on Mg(2+) as a cofactor.

It localises to the cytoplasm. It carries out the reaction IMP + L-aspartate + GTP = N(6)-(1,2-dicarboxyethyl)-AMP + GDP + phosphate + 2 H(+). It functions in the pathway purine metabolism; AMP biosynthesis via de novo pathway; AMP from IMP: step 1/2. Functionally, plays an important role in the de novo pathway of purine nucleotide biosynthesis. Catalyzes the first committed step in the biosynthesis of AMP from IMP. The polypeptide is Adenylosuccinate synthetase (Bacillus cereus (strain ZK / E33L)).